The sequence spans 384 residues: MASVAYICSLPVNTSRDQVSLATVHRLVFMERSERQKIQLTTNQPYDESFEVNAEEAASVHTPSPRQIVSRRTGRQKQSTMSGYAGEKLEEDTKRKKEPPPGPRGANKNDEEEDEDDDDDDDDDDSDDTESDEEEEEPGSAPEGAYDPADYEHLPVTGEIKELFQYITRYTPQTIELDHKLKPFIPDFIPAVGDIDAFLKVPRPDGKPDNLGLLVLDEPCTKQSDPTVLSLWLSENSKQHNVTEVKVKSIENPEKNPKAIDNWIESISELHRSKPPATVHYTRPMPDIDSLMQEWPSEFEELLGKVNLPTADIDCDLAEYVDMICGILDIPVYKNRIHSLHVLFTLYSEFKNSQHFKSATDGQKSDTPPASRSATAEIERLTLD.

2 disordered regions span residues 52-151 (VNAE…PADY) and 358-384 (SATD…LTLD). The segment covering 87–99 (EKLEEDTKRKKEP) has biased composition (basic and acidic residues). A compositionally biased stretch (acidic residues) spans 110–138 (DEEEDEDDDDDDDDDDSDDTESDEEEEEP). Positions 358-374 (SATDGQKSDTPPASRSA) are enriched in polar residues.

It belongs to the IFT46 family.

It localises to the cytoplasm. It is found in the cytoskeleton. The protein localises to the cilium basal body. The protein resides in the cell projection. Its subcellular location is the cilium. Forms part of a complex involved in intraflagellar transport (IFT), the bi-directional movement of particles required for the assembly, maintenance and functioning of primary cilia. Plays a role in early embryonic development. The sequence is that of Intraflagellar transport protein 46 homolog from Danio rerio (Zebrafish).